The chain runs to 1427 residues: DNA-directed RNA polymerase subunit beta' (1427 aa).

4 residues coordinate Zn(2+): C66, C68, C81, and C84. Mg(2+)-binding residues include D472, D474, and D476. 4 residues coordinate Zn(2+): C815, C889, C896, and C899.

The protein belongs to the RNA polymerase beta' chain family. The RNAP catalytic core consists of 2 alpha, 1 beta, 1 beta' and 1 omega subunit. When a sigma factor is associated with the core the holoenzyme is formed, which can initiate transcription. Mg(2+) is required as a cofactor. Zn(2+) serves as cofactor.

It carries out the reaction RNA(n) + a ribonucleoside 5'-triphosphate = RNA(n+1) + diphosphate. Functionally, DNA-dependent RNA polymerase catalyzes the transcription of DNA into RNA using the four ribonucleoside triphosphates as substrates. This is DNA-directed RNA polymerase subunit beta' from Bacteroides fragilis (strain ATCC 25285 / DSM 2151 / CCUG 4856 / JCM 11019 / LMG 10263 / NCTC 9343 / Onslow / VPI 2553 / EN-2).